A 219-amino-acid polypeptide reads, in one-letter code: MTPSHPFLVGVTGGIGSGKSTLCRFLEKMGCELFEADKVARQLQVSDPEIMEGIKSLFGKDVYSKTRSGKLSLDRKRIAREVFSHPATLGALNNLIHPKVYNAFRQRALEAFGRGTAILVMEAAILFETGRAADLDFVVVVAADTETRIKRAVTRGLGTPEDIRKRIALQWPQEMLVARADYVVNNDIGKTKLKEEAGRLYSVLVEAAASGPDCQSKRR.

A DPCK domain is found at 8-215 (LVGVTGGIGS…EAAASGPDCQ (208 aa)). Residue 16-21 (GSGKST) coordinates ATP.

The protein belongs to the CoaE family.

It localises to the cytoplasm. It carries out the reaction 3'-dephospho-CoA + ATP = ADP + CoA + H(+). The protein operates within cofactor biosynthesis; coenzyme A biosynthesis; CoA from (R)-pantothenate: step 5/5. Functionally, catalyzes the phosphorylation of the 3'-hydroxyl group of dephosphocoenzyme A to form coenzyme A. This Chlorobium luteolum (strain DSM 273 / BCRC 81028 / 2530) (Pelodictyon luteolum) protein is Dephospho-CoA kinase.